Reading from the N-terminus, the 318-residue chain is tRNA U34 carboxymethyltransferase (318 aa).

Carboxy-S-adenosyl-L-methionine-binding residues include K88, W102, K107, G126, M192, Y196, and R311.

The protein belongs to the class I-like SAM-binding methyltransferase superfamily. CmoB family. In terms of assembly, homotetramer.

The enzyme catalyses carboxy-S-adenosyl-L-methionine + 5-hydroxyuridine(34) in tRNA = 5-carboxymethoxyuridine(34) in tRNA + S-adenosyl-L-homocysteine + H(+). Its function is as follows. Catalyzes carboxymethyl transfer from carboxy-S-adenosyl-L-methionine (Cx-SAM) to 5-hydroxyuridine (ho5U) to form 5-carboxymethoxyuridine (cmo5U) at position 34 in tRNAs. The sequence is that of tRNA U34 carboxymethyltransferase from Pseudomonas fluorescens (strain SBW25).